The sequence spans 439 residues: FBD-associated F-box protein At5g56380 (439 aa).

One can recognise an F-box domain in the interval 1-61 (MDRISHLADE…LPETWGYQEP (61 aa)). The region spanning 358-406 (WNQPGSVPRCLSSSLETLEWVEYGGTHEEKELSTYLFKTAVCFKKASFT) is the FBD domain.

This Arabidopsis thaliana (Mouse-ear cress) protein is FBD-associated F-box protein At5g56380.